The following is a 155-amino-acid chain: Protein-export protein SecB (155 aa).

It belongs to the SecB family. Homotetramer, a dimer of dimers. One homotetramer interacts with 1 SecA dimer.

The protein resides in the cytoplasm. One of the proteins required for the normal export of preproteins out of the cell cytoplasm. It is a molecular chaperone that binds to a subset of precursor proteins, maintaining them in a translocation-competent state. It also specifically binds to its receptor SecA. This chain is Protein-export protein SecB, found in Vibrio vulnificus (strain CMCP6).